A 450-amino-acid chain; its full sequence is MNEFQPVNRRQFLFTLGATAASAILLKGCGNPPSSSGGGTSSTTQPTAAGASDLEVKTIKLGYIPIFEAAPLIIGREKGFFAKYGLDVEVSKQASWAAARDNVILGSAGGGIDGGQWQMPMPALLTEGAISNGQKVPMYVLACLSTQGNGIAVSNQLKAQNLGLKLAPNRDFILNYPQTSGRKFKASYTFPNANQDFWIRYWFAAGGIDPDKDIELLTVPSAETLQNMRNGTIDCFSTGDPWPSRIAKDDIGYQAALTGQMWPYHPEEFLALRADWVDKHPKATLALLMGLMEAQQWCDQKANRAEMAKILSGRNFFNVPVSILQPILEGQIKVGADGKDLNNFDAGPLFWKSPRGSVSYPYKGLTLWFLVESIRWGFNKQVLPDIAAAQKLNDRVTREDLWQEAAKKLGVPAADIPTGSTRGTETFFDGITYNPDSPQAYLQSLKIKRA.

Residues 1–36 constitute a signal peptide (tat-type signal); sequence MNEFQPVNRRQFLFTLGATAASAILLKGCGNPPSSS.

This sequence belongs to the CmpA/NrtA family. In terms of assembly, the complex is composed of two ATP-binding proteins (CmpC and CmpD), a transmembrane protein (CmpB) and a solute-binding protein (CmpA). In terms of processing, predicted to be exported by the Tat system. The position of the signal peptide cleavage has not been experimentally proven. The N-terminus is blocked.

The protein localises to the cell inner membrane. In terms of biological role, part of the ABC transporter complex CmpABCD involved in bicarbonate transport. Binds bicarbonate with high affinity. The sequence is that of Bicarbonate-binding protein CmpA (cmpA) from Synechococcus elongatus (strain ATCC 33912 / PCC 7942 / FACHB-805) (Anacystis nidulans R2).